The primary structure comprises 1441 residues: Probable cleavage and polyadenylation specificity factor subunit 1 (1441 aa).

This sequence belongs to the CPSF1 family. In terms of assembly, CPSF is a heterotetramer composed of four distinct subunits 160, 100, 70 and 30 kDa.

It is found in the nucleus. Functionally, CPSF plays a key role in pre-mRNA 3'-end formation, recognizing the AAUAAA signal sequence and interacting with poly(A)polymerase and other factors to bring about cleavage and poly(A) addition. This subunit is involved in the RNA recognition step of the polyadenylation reaction. The polypeptide is Probable cleavage and polyadenylation specificity factor subunit 1 (Oryza sativa subsp. japonica (Rice)).